The sequence spans 214 residues: Adenylate kinase (214 aa).

10-15 serves as a coordination point for ATP; that stretch reads GAGKGT. Residues 30-59 form an NMP region; the sequence is STGDMLRAAIKAGTELGKQAKAVIDAGQLV. AMP contacts are provided by residues Thr31, Arg36, 57-59, 85-88, and Gln92; these read QLV and GFPR. The tract at residues 122–159 is LID; sequence GRRAHLPSGRTYHVVYNPPKVEGKDDVTGEDLVVRDDD. Residues Arg123 and 132-133 each bind ATP; that span reads TY. Arg156 and Arg167 together coordinate AMP. Lys200 serves as a coordination point for ATP.

It belongs to the adenylate kinase family. As to quaternary structure, monomer.

It is found in the cytoplasm. The catalysed reaction is AMP + ATP = 2 ADP. Its pathway is purine metabolism; AMP biosynthesis via salvage pathway; AMP from ADP: step 1/1. Functionally, catalyzes the reversible transfer of the terminal phosphate group between ATP and AMP. Plays an important role in cellular energy homeostasis and in adenine nucleotide metabolism. The chain is Adenylate kinase from Vibrio campbellii (strain ATCC BAA-1116).